The sequence spans 171 residues: MKFIPALIIFVFTIFALTNSETTYSGFKITSADPKNPCSISVPQTDVGTKCIDVCGQGNINIAAVSGETNKYDINGYQATDQCKNSAGQQTLTCGTPVTVGVFSIDCAPDAGATTAAVTTAATTAAVTTAATTAAVTTASTTAAFTTTGTSSTIVIPFALILSLLLSVITL.

Residues 1-20 form the signal peptide; that stretch reads MKFIPALIIFVFTIFALTNS. The GPI-like-anchor amidated glycine moiety is linked to residue Gly-149. Positions 150 to 171 are cleaved as a propeptide — removed in mature form; it reads TSSTIVIPFALILSLLLSVITL.

Belongs to the ponticulin family. Post-translationally, the GPI-like-anchor contains a phosphoceramide group, rather than a phosphatidyl group.

Its subcellular location is the cell membrane. This chain is Ponticulin-like protein F (ponF), found in Dictyostelium discoideum (Social amoeba).